Reading from the N-terminus, the 679-residue chain is Stress-70 protein, mitochondrial (679 aa).

A mitochondrion-targeting transit peptide spans 1–46 (MISASRAAVSRFVGTAASRGPTAARHQDGWNGLSHEAFRIVSRRDY). The segment at 1-432 (MISASRAAVS…IQGGVLAGDV (432 aa)) is interaction with NFS1. ADP-binding residues include Thr63 and Asn64. Residues 63 to 431 (TNSCVAVMEG…AIQGGVLAGD (369 aa)) are nucleotide-binding domain (NBD). Lys76 is modified (N6-acetyllysine). Residue Thr87 is modified to Phosphothreonine. N6-acetyllysine; alternate occurs at positions 135 and 138. N6-succinyllysine; alternate is present on residues Lys135 and Lys138. Position 143 is an N6-acetyllysine (Lys143). Lys206 carries the N6-acetyllysine; alternate modification. Position 206 is an N6-succinyllysine; alternate (Lys206). Lys206 bears the N6-malonyllysine; alternate mark. Residues Lys234 and Lys288 each carry the N6-acetyllysine modification. Lys300 carries the N6-acetyllysine; alternate modification. Residue Lys300 is modified to N6-succinyllysine; alternate. Residues Glu313, Lys316, and Ser320 each contribute to the ADP site. Residue Lys368 is modified to N6-succinyllysine. ADP is bound by residues Gly388 and Arg391. Position 394 is an N6-succinyllysine (Lys394). Ser408 is modified (phosphoserine). An interdomain linker region spans residues 432-441 (VTDVLLLDVT). The interval 432–679 (VTDVLLLDVT…QKDNQKEEKQ (248 aa)) is interaction with FXN and ISCU. The tract at residues 442–679 (PLSLGIETLG…QKDNQKEEKQ (238 aa)) is substrate-binding domain (SBD). Arg513 bears the Omega-N-methylarginine mark. 2 positions are modified to N6-acetyllysine; alternate: Lys567 and Lys600. N6-succinyllysine; alternate occurs at positions 567 and 600. Lys610 is subject to N6-succinyllysine. N6-acetyllysine is present on Lys612. Lys646 carries the post-translational modification N6-acetyllysine; alternate. N6-succinyllysine; alternate is present on Lys646. The interval 656 to 679 (ASEREGSGSSGTGEQKDNQKEEKQ) is disordered. A compositionally biased stretch (basic and acidic residues) spans 669 to 679 (EQKDNQKEEKQ).

Belongs to the heat shock protein 70 family. In terms of assembly, interacts strongly with the intermediate form of FXN and weakly with its mature form. Interacts with HSCB. Associates with the mitochondrial contact site and cristae organizing system (MICOS) complex, composed of at least MICOS10/MIC10, CHCHD3/MIC19, CHCHD6/MIC25, APOOL/MIC27, IMMT/MIC60, APOO/MIC23/MIC26 and QIL1/MIC13. This complex was also known under the names MINOS or MitOS complex. The MICOS complex associates with mitochondrial outer membrane proteins SAMM50, MTX1, MTX2 and DNAJC11, mitochondrial inner membrane protein TMEM11 and with HSPA9. Interacts with DNLZ, the interaction is required to prevent self-aggregation. Interacts with TESPA1. Interacts with PDPN. Interacts with NFU1, NFS1 and ISCU. Interacts with TP53; the interaction promotes TP53 degradation. Interacts (via SBD domain) with UBXN2A; the interaction with UBXN2A inhibits HSPA9/MOT-2 interaction with and degradation of TP53, thereby promotes TP53 translocation to the nucleus. Interacts with ITPR1 AND VDAC1; this interaction couples ITPR1 to VDAC1. Component of the TIM23 mitochondrial inner membrane pre-sequence translocase complex.

It is found in the mitochondrion. It localises to the nucleus. The protein localises to the nucleolus. Its subcellular location is the cytoplasm. The protein resides in the mitochondrion matrix. It catalyses the reaction ATP + H2O = ADP + phosphate + H(+). With respect to regulation, the chaperone activity is regulated by ATP-induced allosteric coupling of the nucleotide-binding (NBD) and substrate-binding (SBD) domains. ATP binding in the NBD leads to a conformational change in the NBD, which is transferred through the interdomain linker (IDL) to the substrate-binding domain (SBD). This elicits a reduced substrate affinity and a faster substrate exchange rate. Upon hydrolysis of ATP to ADP, the protein undergoes a conformational change that increases its affinity for substrate proteins. It cycles through repeated phases of ATP hydrolysis and nucleotide exchange, facilitating repeated cycles of substrate binding and release. Functions in collaboration with co-chaperones. Functions with the co-chaperone, DNLZ, to maintain solubility and regulate ATP hydrolysis. Nucleotide exchange factors, GRPEL1 and GRPEL2, accelerate nucleotide exchange. Functionally, mitochondrial chaperone that plays a key role in mitochondrial protein import, folding, and assembly. Plays an essential role in the protein quality control system, the correct folding of proteins, the re-folding of misfolded proteins, and the targeting of proteins for subsequent degradation. These processes are achieved through cycles of ATP binding, ATP hydrolysis, and ADP release, mediated by co-chaperones. In mitochondria, it associates with the TIM (translocase of the inner membrane) protein complex to assist in the import and folding of mitochondrial proteins. Plays an important role in mitochondrial iron-sulfur cluster (ISC) biogenesis, interacts with and stabilizes ISC cluster assembly proteins FXN, NFU1, NFS1 and ISCU. Regulates erythropoiesis via stabilization of ISC assembly. Regulates mitochondrial calcium-dependent apoptosis by coupling two calcium channels, ITPR1 and VDAC1, at the mitochondria-associated endoplasmic reticulum (ER) membrane to facilitate calcium transport from the ER lumen to the mitochondria intermembrane space, providing calcium for the downstream calcium channel MCU, which releases it into the mitochondrial matrix. Although primarily located in the mitochondria, it is also found in other cellular compartments. In the cytosol, it associates with proteins involved in signaling, apoptosis, or senescence. It may play a role in cell cycle regulation via its interaction with and promotion of degradation of TP53. May play a role in the control of cell proliferation and cellular aging. Protects against reactive oxygen species (ROS). Extracellular HSPA9 plays a cytoprotective role by preventing cell lysis following immune attack by the membrane attack complex by disrupting formation of the complex. The protein is Stress-70 protein, mitochondrial of Bos taurus (Bovine).